A 255-amino-acid polypeptide reads, in one-letter code: 5'-nucleotidase SurE (255 aa).

A divalent metal cation-binding residues include Asp8, Asp9, Ser40, and Asn93.

The protein belongs to the SurE nucleotidase family. A divalent metal cation serves as cofactor.

It localises to the cytoplasm. The catalysed reaction is a ribonucleoside 5'-phosphate + H2O = a ribonucleoside + phosphate. Its function is as follows. Nucleotidase that shows phosphatase activity on nucleoside 5'-monophosphates. In Bradyrhizobium sp. (strain ORS 278), this protein is 5'-nucleotidase SurE.